The sequence spans 312 residues: Glyoxylate/hydroxypyruvate reductase A (312 aa).

Residue Arg227 is part of the active site. His275 functions as the Proton donor in the catalytic mechanism.

Belongs to the D-isomer specific 2-hydroxyacid dehydrogenase family. GhrA subfamily.

It is found in the cytoplasm. It carries out the reaction glycolate + NADP(+) = glyoxylate + NADPH + H(+). The enzyme catalyses (R)-glycerate + NAD(+) = 3-hydroxypyruvate + NADH + H(+). The catalysed reaction is (R)-glycerate + NADP(+) = 3-hydroxypyruvate + NADPH + H(+). In terms of biological role, catalyzes the NADPH-dependent reduction of glyoxylate and hydroxypyruvate into glycolate and glycerate, respectively. This is Glyoxylate/hydroxypyruvate reductase A from Salmonella enteritidis PT4 (strain P125109).